The following is a 327-amino-acid chain: 4-diphosphocytidyl-2-C-methyl-D-erythritol kinase (327 aa).

Lys-14 is an active-site residue. 97 to 107 lines the ATP pocket; it reads PDGAGLGGGSA. Residue Asp-140 is part of the active site.

This sequence belongs to the GHMP kinase family. IspE subfamily.

The enzyme catalyses 4-CDP-2-C-methyl-D-erythritol + ATP = 4-CDP-2-C-methyl-D-erythritol 2-phosphate + ADP + H(+). Its pathway is isoprenoid biosynthesis; isopentenyl diphosphate biosynthesis via DXP pathway; isopentenyl diphosphate from 1-deoxy-D-xylulose 5-phosphate: step 3/6. Its function is as follows. Catalyzes the phosphorylation of the position 2 hydroxy group of 4-diphosphocytidyl-2C-methyl-D-erythritol. This is 4-diphosphocytidyl-2-C-methyl-D-erythritol kinase from Oleidesulfovibrio alaskensis (strain ATCC BAA-1058 / DSM 17464 / G20) (Desulfovibrio alaskensis).